The following is a 143-amino-acid chain: Small ribosomal subunit protein uS12 (143 aa).

Basic residues predominate over residues 1-20 (MGKCRGLRTARKLRSHRRDH). The disordered stretch occupies residues 1 to 26 (MGKCRGLRTARKLRSHRRDHKWHDKQ). Residue K37 forms a Glycyl lysine isopeptide (Lys-Gly) (interchain with G-Cter in SUMO2) linkage. An N6-succinyllysine modification is found at K54. P62 carries the post-translational modification 3-hydroxyproline. K135 bears the N6-acetyllysine mark.

Belongs to the universal ribosomal protein uS12 family. In terms of assembly, component of the 40S small ribosomal subunit. Part of the small subunit (SSU) processome, composed of more than 70 proteins and the RNA chaperone small nucleolar RNA (snoRNA) U3. As to quaternary structure, (Microbial infection) Interacts with the African swine fever virus (ASFV) ubiquitin-conjugating enzyme UBCv1; this interaction probably plays a role in the viral regulation of host protein synthesis. Post-translationally, hydroxylation at Pro-62 affects translation termination efficiency.

It is found in the cytoplasm. Its subcellular location is the cytosol. The protein resides in the rough endoplasmic reticulum. It localises to the nucleus. The protein localises to the nucleolus. Its function is as follows. Component of the ribosome, a large ribonucleoprotein complex responsible for the synthesis of proteins in the cell. The small ribosomal subunit (SSU) binds messenger RNAs (mRNAs) and translates the encoded message by selecting cognate aminoacyl-transfer RNA (tRNA) molecules. The large subunit (LSU) contains the ribosomal catalytic site termed the peptidyl transferase center (PTC), which catalyzes the formation of peptide bonds, thereby polymerizing the amino acids delivered by tRNAs into a polypeptide chain. The nascent polypeptides leave the ribosome through a tunnel in the LSU and interact with protein factors that function in enzymatic processing, targeting, and the membrane insertion of nascent chains at the exit of the ribosomal tunnel. Plays an important role in translational accuracy. Part of the small subunit (SSU) processome, first precursor of the small eukaryotic ribosomal subunit. During the assembly of the SSU processome in the nucleolus, many ribosome biogenesis factors, an RNA chaperone and ribosomal proteins associate with the nascent pre-rRNA and work in concert to generate RNA folding, modifications, rearrangements and cleavage as well as targeted degradation of pre-ribosomal RNA by the RNA exosome. The polypeptide is Small ribosomal subunit protein uS12 (RPS23) (Sus scrofa (Pig)).